Here is a 117-residue protein sequence, read N- to C-terminus: Large ribosomal subunit protein uL18 (117 aa).

This sequence belongs to the universal ribosomal protein uL18 family. As to quaternary structure, part of the 50S ribosomal subunit; part of the 5S rRNA/L5/L18/L25 subcomplex. Contacts the 5S and 23S rRNAs.

Its function is as follows. This is one of the proteins that bind and probably mediate the attachment of the 5S RNA into the large ribosomal subunit, where it forms part of the central protuberance. This is Large ribosomal subunit protein uL18 from Aliivibrio fischeri (strain ATCC 700601 / ES114) (Vibrio fischeri).